Reading from the N-terminus, the 321-residue chain is Glucokinase (321 aa).

Gly-8–Thr-13 contacts ATP.

Belongs to the bacterial glucokinase family.

Its subcellular location is the cytoplasm. The enzyme catalyses D-glucose + ATP = D-glucose 6-phosphate + ADP + H(+). This chain is Glucokinase, found in Escherichia coli O127:H6 (strain E2348/69 / EPEC).